The primary structure comprises 172 residues: Peptide methionine sulfoxide reductase MsrA (172 aa).

Cys-12 is a catalytic residue.

Belongs to the MsrA Met sulfoxide reductase family.

It catalyses the reaction L-methionyl-[protein] + [thioredoxin]-disulfide + H2O = L-methionyl-(S)-S-oxide-[protein] + [thioredoxin]-dithiol. The catalysed reaction is [thioredoxin]-disulfide + L-methionine + H2O = L-methionine (S)-S-oxide + [thioredoxin]-dithiol. Its function is as follows. Has an important function as a repair enzyme for proteins that have been inactivated by oxidation. Catalyzes the reversible oxidation-reduction of methionine sulfoxide in proteins to methionine. This chain is Peptide methionine sulfoxide reductase MsrA, found in Ligilactobacillus salivarius (strain UCC118) (Lactobacillus salivarius).